Reading from the N-terminus, the 91-residue chain is Small ribosomal subunit protein bS18 (91 aa).

Residues 1–27 (MTQQSNTERKPRAKGPKRPRKPKVDPF) are disordered. Residues 11-21 (PRAKGPKRPRK) are compositionally biased toward basic residues.

The protein belongs to the bacterial ribosomal protein bS18 family. Part of the 30S ribosomal subunit. Forms a tight heterodimer with protein bS6.

Its function is as follows. Binds as a heterodimer with protein bS6 to the central domain of the 16S rRNA, where it helps stabilize the platform of the 30S subunit. This is Small ribosomal subunit protein bS18 from Deinococcus geothermalis (strain DSM 11300 / CIP 105573 / AG-3a).